Here is a 491-residue protein sequence, read N- to C-terminus: MDFLGLPTILLLVCISCFLIAAWRSTSQRGKEPPGPTPIPIIGNVFQLNPWDLMESFKELSKKYGPIFTIHLGPKKVVVLYGYDVVKEALIDNGEAFSGRGNLPLFEKVFKGTGIVTSNGESWRQMRRFALTTLRDFGMGKKSIEERIQEEARFLVERIRNTHEKPFNPTVFLMHAVSNIICSTVFGDRFDYEDKKFLDLIEMLDENERYQNRIQTQLYNFFPTILDYLPGPHKTLIKSIETVDDFITEIIRAHQESFDASCPRDFIDAFINKMQQEKENSYFTVESLTRTTLDLFLAGTGTTSTTLRYGLLILLKHPEIEEKMHKEIDRVVGRDRSPCMADRSQLPYTDAVIHEIQRFIDFLPVNLPRAVIKDTKLRDYFIPKDTMIFPLLSPILQDCKEFPNPEKFDPGHFLNANGTFRKSNYFMPFSAGKRICAGEGLARMELFLFLTSILQNFSLKPVKDRKDIDISPIVTSAANIPRPYEVSFIPR.

Cysteine 436 contacts heme.

It belongs to the cytochrome P450 family. Requires heme as cofactor.

It localises to the endoplasmic reticulum membrane. It is found in the microsome membrane. The catalysed reaction is an organic molecule + reduced [NADPH--hemoprotein reductase] + O2 = an alcohol + oxidized [NADPH--hemoprotein reductase] + H2O + H(+). Cytochromes P450 are a group of heme-thiolate monooxygenases. In liver microsomes, this enzyme is involved in an NADPH-dependent electron transport pathway. It oxidizes a variety of structurally unrelated compounds, including steroids, fatty acids, and xenobiotics. This Gallus gallus (Chicken) protein is Cytochrome P450 2H2 (CYP2H2).